The primary structure comprises 609 residues: QWRF motif-containing protein 4 (609 aa).

Disordered regions lie at residues 1–227 (MQVG…IRGN) and 271–369 (EVSS…TAQS). 2 stretches are compositionally biased toward polar residues: residues 11-21 (GKQQQSVSDAT) and 46-57 (EVSSRYRSPTPT). 2 stretches are compositionally biased toward low complexity: residues 98-110 (PVSDVLVDLPVSS) and 129-143 (SLSVSFQSDSVSVPV). Over residues 151–180 (VTSSTDRTLRPSSSNIAHKQQSETTSVTRK) the composition is skewed to polar residues. 2 stretches are compositionally biased toward low complexity: residues 271–285 (EVSSSTTSEDSSSTE) and 302–332 (SAPGSRTASPSRSSFSSSSSSNSRGMSPSRG). Residues 407–410 (QWRF) carry the QWRF motif motif. Positions 588-609 (EEEVRDDAESSPLLPLSKFQWP) are disordered.

It belongs to the QWRF family.

The chain is QWRF motif-containing protein 4 (QWRF4) from Arabidopsis thaliana (Mouse-ear cress).